A 414-amino-acid polypeptide reads, in one-letter code: Patatin-like protein 1 (414 aa).

Positions Leu-20–Met-224 constitute a PNPLA domain. The GXGXXG motif lies at Gly-24 to Gly-29. Positions Gly-62 to Gly-66 match the GXSXG motif. Residue Ser-64 is the Nucleophile of the active site. Asp-211 (proton acceptor) is an active-site residue. Positions Asp-211–Gly-213 match the DGA/G motif.

This sequence belongs to the patatin family.

Functionally, possesses non-specific lipolytic acyl hydrolase (LAH) activity. Hydrolyzes phospholipids as well as galactolipids. May play a role in disease resistance. The polypeptide is Patatin-like protein 1 (PLP1) (Oryza sativa subsp. indica (Rice)).